The chain runs to 443 residues: Arginine biosynthesis bifunctional protein ArgJ, mitochondrial (443 aa).

6 residues coordinate substrate: T179, K206, T217, E303, N438, and S443. Catalysis depends on T217, which acts as the Nucleophile.

Belongs to the ArgJ family. In terms of assembly, heterodimer of an alpha and a beta chain. Post-translationally, the alpha and beta chains are autoproteolytically processed from a single precursor protein within the mitochondrion.

The protein resides in the mitochondrion matrix. The catalysed reaction is N(2)-acetyl-L-ornithine + L-glutamate = N-acetyl-L-glutamate + L-ornithine. It catalyses the reaction L-glutamate + acetyl-CoA = N-acetyl-L-glutamate + CoA + H(+). The protein operates within amino-acid biosynthesis; L-arginine biosynthesis; L-ornithine and N-acetyl-L-glutamate from L-glutamate and N(2)-acetyl-L-ornithine (cyclic): step 1/1. It participates in amino-acid biosynthesis; L-arginine biosynthesis; N(2)-acetyl-L-ornithine from L-glutamate: step 1/4. Its function is as follows. Catalyzes two activities which are involved in the cyclic version of arginine biosynthesis: the synthesis of acetylglutamate from glutamate and acetyl-CoA, and of ornithine by transacetylation between acetylornithine and glutamate. This Eremothecium gossypii (strain ATCC 10895 / CBS 109.51 / FGSC 9923 / NRRL Y-1056) (Yeast) protein is Arginine biosynthesis bifunctional protein ArgJ, mitochondrial.